The chain runs to 361 residues: CRISPR system associated protein Cas8 (361 aa).

As to quaternary structure, monomer. Can form a Cascade complex with Csa5, Cas7, Cas5a, Cas3 and Cas3'.

In terms of biological role, CRISPR (clustered regularly interspaced short palindromic repeat) is an adaptive immune system that provides protection against mobile genetic elements (viruses, transposable elements and conjugative plasmids). CRISPR clusters contain sequences complementary to antecedent mobile elements and target invading nucleic acids. CRISPR clusters are transcribed and processed into CRISPR RNA (crRNA). In Thermoproteus tenax (strain ATCC 35583 / DSM 2078 / JCM 9277 / NBRC 100435 / Kra 1), this protein is CRISPR system associated protein Cas8 (cas8a2).